A 515-amino-acid polypeptide reads, in one-letter code: Dimethylnonatriene synthase (515 aa).

Residues 3-23 form a helical membrane-spanning segment; sequence FLFSTLQLSLFSLALVIFGYI. His219 lines the substrate pocket. Lys252 is covalently cross-linked (Glycyl lysine isopeptide (Lys-Gly) (interchain with G-Cter in ubiquitin)). Residue Cys452 coordinates heme.

This sequence belongs to the cytochrome P450 family. Heme serves as cofactor. Expressed in stems, flower peduncles, receptacle of developing and mature flowers and in stigma of mature opening flower buds.

It is found in the membrane. The enzyme catalyses (3S,6E)-nerolidol + reduced [NADPH--hemoprotein reductase] + O2 = (3E)-4,8-dimethylnona-1,3,7-triene + but-3-en-2-one + oxidized [NADPH--hemoprotein reductase] + 2 H2O + H(+). It carries out the reaction (6E,10E)-geranyllinalool + reduced [NADPH--hemoprotein reductase] + O2 = (3E,7E)-4,8,12-trimethyltrideca 1,3,7,11-tetraene + but-3-en-2-one + oxidized [NADPH--hemoprotein reductase] + 2 H2O + H(+). The protein operates within secondary metabolite biosynthesis; terpenoid biosynthesis. Its function is as follows. Involved in the biosynthesis of homoterpenes, attractants of herbivores parasitoids and predators (e.g. predatory mites and parasitoid wasps). Catalyzes the conversion of the C20 (E,E)-geranyllinalool to C16-homoterpene 4,8,12-trimethyltrideca-1,3,7,11-tetraene (TMTT) of the C15 (E)-nerolidol to C11-homoterpene (E)-4,8-dimethyl-1,3,7-nonatriene (DMNT); these volatile compounds are produced upon insect herbivore attack and emitted from flowers and vegetative tissues during herbivore feeding. Required during resistance responses to the fungus Alternaria brassicae. Prevents oviposition of the phloem-feeding insect cabbage whitefly (Aleyrodes proletella). The protein is Dimethylnonatriene synthase of Arabidopsis thaliana (Mouse-ear cress).